Here is a 149-residue protein sequence, read N- to C-terminus: Large ribosomal subunit protein uL22c (149 aa).

Belongs to the universal ribosomal protein uL22 family. As to quaternary structure, part of the 50S ribosomal subunit.

Its subcellular location is the plastid. It localises to the chloroplast. In terms of biological role, this protein binds specifically to 23S rRNA. Its function is as follows. The globular domain of the protein is located near the polypeptide exit tunnel on the outside of the subunit, while an extended beta-hairpin is found that lines the wall of the exit tunnel in the center of the 70S ribosome. In Pelargonium hortorum (Common geranium), this protein is Large ribosomal subunit protein uL22c (rpl22-A).